The chain runs to 134 residues: MKSVFTISASLAISLMLCCTAQANDHKLLGVIAMPRNETNDLALKLPVCRIVKRIQLSADHGDLQLSGASVYFKAARSASQSLNIPSEIKEGQTTDWININSDNDNKRCVSKITFSGHTVNSSDMATLKIIGDD.

The N-terminal stretch at 1–23 (MKSVFTISASLAISLMLCCTAQA) is a signal peptide.

The protein belongs to the UPF0412 family.

The chain is UPF0412 protein YaaI from Shigella dysenteriae serotype 1 (strain Sd197).